Reading from the N-terminus, the 218-residue chain is Phosphoglycolate phosphatase (218 aa).

Residue aspartate 7 is the Nucleophile of the active site. Mg(2+) is bound by residues aspartate 7, aspartate 9, and aspartate 167.

It belongs to the HAD-like hydrolase superfamily. CbbY/CbbZ/Gph/YieH family. Mg(2+) serves as cofactor.

It catalyses the reaction 2-phosphoglycolate + H2O = glycolate + phosphate. The protein operates within organic acid metabolism; glycolate biosynthesis; glycolate from 2-phosphoglycolate: step 1/1. Functionally, specifically catalyzes the dephosphorylation of 2-phosphoglycolate. Is involved in the dissimilation of the intracellular 2-phosphoglycolate formed during the DNA repair of 3'-phosphoglycolate ends, a major class of DNA lesions induced by oxidative stress. This is Phosphoglycolate phosphatase from Cereibacter sphaeroides (Rhodobacter sphaeroides).